A 503-amino-acid chain; its full sequence is Putative ribose/galactose/methyl galactoside import ATP-binding protein (503 aa).

ABC transporter domains lie at 7 to 244 and 254 to 498; these read LEMI…VGRE and VPIG…TGQL. 39-46 provides a ligand contact to ATP; the sequence is GENGAGKS.

This sequence belongs to the ABC transporter superfamily. Carbohydrate importer 2 (CUT2) (TC 3.A.1.2) family.

It is found in the cell membrane. The enzyme catalyses D-ribose(out) + ATP + H2O = D-ribose(in) + ADP + phosphate + H(+). It catalyses the reaction D-galactose(out) + ATP + H2O = D-galactose(in) + ADP + phosphate + H(+). In terms of biological role, part of an ABC transporter complex involved in carbohydrate import. Could be involved in ribose, galactose and/or methyl galactoside import. Responsible for energy coupling to the transport system. The chain is Putative ribose/galactose/methyl galactoside import ATP-binding protein from Geobacillus kaustophilus (strain HTA426).